The primary structure comprises 25 residues: MFEISFYIALKNFNSLGILKMWRFI.

The protein localises to the plastid. It is found in the chloroplast. This is an uncharacterized protein from Trieres chinensis (Marine centric diatom).